Here is a 131-residue protein sequence, read N- to C-terminus: Small ribosomal subunit protein uS8 (131 aa).

It belongs to the universal ribosomal protein uS8 family. Part of the 30S ribosomal subunit. Contacts proteins S5 and S12.

One of the primary rRNA binding proteins, it binds directly to 16S rRNA central domain where it helps coordinate assembly of the platform of the 30S subunit. This Chlorobium phaeovibrioides (strain DSM 265 / 1930) (Prosthecochloris vibrioformis (strain DSM 265)) protein is Small ribosomal subunit protein uS8.